Consider the following 427-residue polypeptide: MGSVRTNRYSIVSSEEDGMKLATMAVANGFGNGKSKVHTRQQCRSRFVKKDGHCNVQFINVGEKGQRYLADIFTTCVDIRWRWMLVIFCLAFVLSWLFFGCVFWLIALLHGDLDASKESKACVSEVNSFTAAFLFSIETQTTIGYGFRCVTDECPVAVFMVVFQSIVGCIIDAFIIGAVMAKMAKPKKRNETLVFSHNAVIAMRDGKLCLMWRVGNLRKSHLVEAHVRAQLLKSRITSEGEYIPLDQIDINVGFDSGIDRIFLVSPITIVHEIDEDSPLYDLSKQDIDNADFEIVVILEGMVEATAMTTQCRSSYLANEILWGHRYEPVLFEEKHYYKVDYSRFHKTYEVPNTPLCSARDLAEKKYILSNANSFCYENEVALTSKEEDDSENGVPESTSTDTPPDLDLHNQASVPLEPRPLRRESEI.

The Cytoplasmic segment spans residues 1 to 81; that stretch reads MGSVRTNRYS…IFTTCVDIRW (81 aa). An S-nitrosocysteine modification is found at Cys76. The chain crosses the membrane as a helical span at residues 82-106; it reads RWMLVIFCLAFVLSWLFFGCVFWLI. At 107–128 the chain is on the extracellular side; it reads ALLHGDLDASKESKACVSEVNS. An intramembrane region (helical; Pore-forming) is located at residues 129 to 140; the sequence is FTAAFLFSIETQ. The pore-forming intramembrane region spans 141-147; sequence TTIGYGF. The short motif at 142-147 is the Selectivity filter element; sequence TIGYGF. Residues 148–156 are Extracellular-facing; the sequence is RCVTDECPV. Residues 157–178 traverse the membrane as a helical segment; that stretch reads AVFMVVFQSIVGCIIDAFIIGA. Over 179 to 427 the chain is Cytoplasmic; sequence VMAKMAKPKK…PRPLRRESEI (249 aa). The tract at residues 181–208 is polyphosphoinositide (PIP2)-binding; it reads AKMAKPKKRNETLVFSHNAVIAMRDGKL. Residues 384-427 form a disordered region; it reads SKEEDDSENGVPESTSTDTPPDLDLHNQASVPLEPRPLRRESEI. Positions 425 to 427 match the PDZ-binding motif; the sequence is SEI.

Belongs to the inward rectifier-type potassium channel (TC 1.A.2.1) family. KCNJ2 subfamily. In terms of assembly, homotetramer. Homomultimeric and heteromultimeric association with KCNJ4/Kir2.3. Can form heteromeric channels with Kir2.6/KCNJ18. Associates, via its PDZ-recognition domain, with a complex containing LIN7A, LIN7B, LIN7C, DLG1, CASK and APBA1. S-nitrosylation increases the open probability and inward rectifying currents.

Its subcellular location is the cell membrane. It is found in the sarcolemma. The protein resides in the T-tubule. It catalyses the reaction K(+)(in) = K(+)(out). Activated by phosphatidylinositol 4,5 biphosphate (PtdIns(4,5)P2). Inward rectifier potassium channels are characterized by a greater tendency to allow potassium to flow into the cell rather than out of it. Their voltage dependence is regulated by the concentration of extracellular potassium; as external potassium is raised, the voltage range of the channel opening shifts to more positive voltages. The inward rectification is mainly due to the blockage of outward current by internal magnesium. Blocked by external barium or cesium. Probably participates in establishing action potential waveform and excitability of neuronal and muscle tissues. This Canis lupus familiaris (Dog) protein is Inward rectifier potassium channel 2 (KCNJ2).